A 239-amino-acid chain; its full sequence is Large ribosomal subunit protein uL2 (239 aa).

Positions 200-239 (VNHPHGGKEHHIGRPSTVSRRAPPGRKVGHIAARRTGRRK) are disordered. Residues 222-239 (PPGRKVGHIAARRTGRRK) show a composition bias toward basic residues.

Belongs to the universal ribosomal protein uL2 family. As to quaternary structure, part of the 50S ribosomal subunit. Forms a bridge to the 30S subunit in the 70S ribosome.

In terms of biological role, one of the primary rRNA binding proteins. Required for association of the 30S and 50S subunits to form the 70S ribosome, for tRNA binding and peptide bond formation. It has been suggested to have peptidyltransferase activity; this is somewhat controversial. Makes several contacts with the 16S rRNA in the 70S ribosome. This Thermococcus onnurineus (strain NA1) protein is Large ribosomal subunit protein uL2.